Here is a 61-residue protein sequence, read N- to C-terminus: Metallothionein-1F (61 aa).

N-acetylmethionine is present on M1. Residues 1–29 form a beta region; sequence MDPNCSCPTGGSCTCAGSCTCKACRCTSC. Positions 5, 7, 13, 15, 19, 21, 24, 26, 29, 33, 34, 36, 37, 41, 44, 48, 50, and 57 each coordinate a divalent metal cation. Positions 30 to 61 are alpha; sequence KKSCCSCCPAGCAKCAQGCICKGASDKCSCCA. S58 carries the phosphoserine modification. A divalent metal cation contacts are provided by C59 and C60.

The protein belongs to the metallothionein superfamily. Type 1 family. Monomer.

In terms of biological role, metallothioneins have a high content of cysteine residues that bind various heavy metals; these proteins are transcriptionally regulated by both heavy metals and glucocorticoids. The sequence is that of Metallothionein-1F (MT1F) from Sus scrofa (Pig).